Here is a 309-residue protein sequence, read N- to C-terminus: Methionyl-tRNA formyltransferase (309 aa).

109 to 112 (SLLP) is a binding site for (6S)-5,6,7,8-tetrahydrofolate.

It belongs to the Fmt family.

It catalyses the reaction L-methionyl-tRNA(fMet) + (6R)-10-formyltetrahydrofolate = N-formyl-L-methionyl-tRNA(fMet) + (6S)-5,6,7,8-tetrahydrofolate + H(+). In terms of biological role, attaches a formyl group to the free amino group of methionyl-tRNA(fMet). The formyl group appears to play a dual role in the initiator identity of N-formylmethionyl-tRNA by promoting its recognition by IF2 and preventing the misappropriation of this tRNA by the elongation apparatus. The polypeptide is Methionyl-tRNA formyltransferase (Clostridium novyi (strain NT)).